The chain runs to 48 residues: ATP synthase protein 8 (48 aa).

A helical transmembrane segment spans residues 13 to 33 (LTYGFLLLIILLVLFSQFLLP).

The protein belongs to the ATPase protein 8 family. As to quaternary structure, F-type ATPases have 2 components, CF(1) - the catalytic core - and CF(0) - the membrane proton channel.

It localises to the mitochondrion membrane. Functionally, mitochondrial membrane ATP synthase (F(1)F(0) ATP synthase or Complex V) produces ATP from ADP in the presence of a proton gradient across the membrane which is generated by electron transport complexes of the respiratory chain. F-type ATPases consist of two structural domains, F(1) - containing the extramembraneous catalytic core and F(0) - containing the membrane proton channel, linked together by a central stalk and a peripheral stalk. During catalysis, ATP synthesis in the catalytic domain of F(1) is coupled via a rotary mechanism of the central stalk subunits to proton translocation. Part of the complex F(0) domain. Minor subunit located with subunit a in the membrane. The polypeptide is ATP synthase protein 8 (ATP8) (Wickerhamomyces canadensis (Yeast)).